Consider the following 144-residue polypeptide: Ribosomal RNA large subunit methyltransferase H (144 aa).

S-adenosyl-L-methionine contacts are provided by residues Gly-92 and 111-116 (LSPMTF).

Belongs to the RNA methyltransferase RlmH family. Homodimer.

It localises to the cytoplasm. It catalyses the reaction pseudouridine(1915) in 23S rRNA + S-adenosyl-L-methionine = N(3)-methylpseudouridine(1915) in 23S rRNA + S-adenosyl-L-homocysteine + H(+). Functionally, specifically methylates the pseudouridine at position 1915 (m3Psi1915) in 23S rRNA. This is Ribosomal RNA large subunit methyltransferase H from Synechococcus sp. (strain CC9311).